We begin with the raw amino-acid sequence, 555 residues long: Formate--tetrahydrofolate ligase (555 aa).

Position 65 to 72 (65 to 72 (TPAGEGKT)) interacts with ATP.

Belongs to the formate--tetrahydrofolate ligase family.

It carries out the reaction (6S)-5,6,7,8-tetrahydrofolate + formate + ATP = (6R)-10-formyltetrahydrofolate + ADP + phosphate. Its pathway is one-carbon metabolism; tetrahydrofolate interconversion. The protein is Formate--tetrahydrofolate ligase of Caldanaerobacter subterraneus subsp. tengcongensis (strain DSM 15242 / JCM 11007 / NBRC 100824 / MB4) (Thermoanaerobacter tengcongensis).